Here is a 432-residue protein sequence, read N- to C-terminus: D-amino acid dehydrogenase (432 aa).

Residue Val-3–Trp-17 participates in FAD binding.

The protein belongs to the DadA oxidoreductase family. FAD is required as a cofactor.

Its subcellular location is the cell inner membrane. It catalyses the reaction a D-alpha-amino acid + A + H2O = a 2-oxocarboxylate + AH2 + NH4(+). It functions in the pathway amino-acid degradation; D-alanine degradation; NH(3) and pyruvate from D-alanine: step 1/1. Functionally, oxidative deamination of D-amino acids. The sequence is that of D-amino acid dehydrogenase from Salmonella typhi.